The chain runs to 169 residues: Glycine-rich RNA-binding protein GRP2A (169 aa).

An RRM domain is found at 8–86; that stretch reads YRCFVGGLAW…RSITVNEAQS (79 aa). Disordered regions lie at residues 69-100 and 125-169; these read MNGQDLDGRSITVNEAQSRGSGAGGGGRGGGG and YSGG…GGGW. A compositionally biased stretch (gly residues) spans 89–100; sequence SGAGGGGRGGGG.

As to expression, predominantly expressed in meristematic and growing tissue.

It is found in the nucleus. May play a general role in circadian phenomena associated with meristematic tissue. The polypeptide is Glycine-rich RNA-binding protein GRP2A (Sinapis alba (White mustard)).